The chain runs to 132 residues: Small ribosomal subunit protein uS8 (132 aa).

This sequence belongs to the universal ribosomal protein uS8 family. In terms of assembly, part of the 30S ribosomal subunit. Contacts proteins S5 and S12.

Its function is as follows. One of the primary rRNA binding proteins, it binds directly to 16S rRNA central domain where it helps coordinate assembly of the platform of the 30S subunit. This chain is Small ribosomal subunit protein uS8, found in Rickettsia conorii (strain ATCC VR-613 / Malish 7).